The chain runs to 453 residues: UDP-glycosyltransferase 76E1 (453 aa).

Residues Ser272, 331 to 333 (APQ), 348 to 356 (HCGWNSTLE), and 370 to 373 (TGDQ) contribute to the UDP-alpha-D-glucose site.

The protein belongs to the UDP-glycosyltransferase family.

Its function is as follows. Possesses low quercetin 3-O-glucosyltransferase and 7-O-glucosyltransferase activities in vitro. This is UDP-glycosyltransferase 76E1 (UGT76E1) from Arabidopsis thaliana (Mouse-ear cress).